A 21-amino-acid polypeptide reads, in one-letter code: Large ribosomal subunit protein uL30 (21 aa).

Positions 1–15 (AKTENKTVTVRQTAS) are enriched in polar residues. The segment at 1–21 (AKTENKTVTVRQTASPIXXXK) is disordered.

It belongs to the universal ribosomal protein uL30 family. As to quaternary structure, part of the 50S ribosomal subunit.

This is Large ribosomal subunit protein uL30 (rpmD) from Brevundimonas diminuta (Pseudomonas diminuta).